Consider the following 500-residue polypeptide: NAD(P)H-quinone oxidoreductase chain 4, chloroplastic (500 aa).

15 helical membrane-spanning segments follow: residues 4 to 24, 37 to 57, 87 to 107, 113 to 130, 134 to 154, 167 to 187, 207 to 227, 242 to 262, 272 to 292, 305 to 325, 330 to 350, 364 to 384, 386 to 406, 417 to 437, and 463 to 483; these read FPWLTTVVVFPIFAGLLLFFF, ICICVLELLLTTYAFCYHFEL, IGPILLTGFITTLATLAAWPV, LFYFLMLAMYSGQIGSFS, LLLFFIMWEFELIPVYLLLSM, FILYTAGGSIFLLMGVLGIGL, IALEILFYIGFLIAFAVKSPI, HYSTCMLLAGILLKMGAYGLV, AHSIFSPWLIIVGIIQIIYAA, IAYSSVSHMGFIIIGIGSISD, GAILQIISHGFIGAALFFLAG, MGGLAIPIPKIFTTFSILSMA, LALPGMSGFVAELIVFFGIIT, VITLVMAIGIILTPIYLLSML, and FVAISILIPVIGIGIYPDFVF.

This sequence belongs to the complex I subunit 4 family.

Its subcellular location is the plastid. It is found in the chloroplast thylakoid membrane. The enzyme catalyses a plastoquinone + NADH + (n+1) H(+)(in) = a plastoquinol + NAD(+) + n H(+)(out). It carries out the reaction a plastoquinone + NADPH + (n+1) H(+)(in) = a plastoquinol + NADP(+) + n H(+)(out). This is NAD(P)H-quinone oxidoreductase chain 4, chloroplastic from Cucumis sativus (Cucumber).